Consider the following 205-residue polypeptide: Octanoyltransferase (205 aa).

The BPL/LPL catalytic domain maps to 30-205; that stretch reads NSSDELVWLL…ILKKEFYKIF (176 aa). Residues 68-75, 140-142, and 153-155 contribute to the substrate site; these read RGGKYTYH, AFG, and GIA. Cys-171 acts as the Acyl-thioester intermediate in catalysis.

The protein belongs to the LipB family.

It localises to the cytoplasm. It catalyses the reaction octanoyl-[ACP] + L-lysyl-[protein] = N(6)-octanoyl-L-lysyl-[protein] + holo-[ACP] + H(+). It participates in protein modification; protein lipoylation via endogenous pathway; protein N(6)-(lipoyl)lysine from octanoyl-[acyl-carrier-protein]: step 1/2. Catalyzes the transfer of endogenously produced octanoic acid from octanoyl-acyl-carrier-protein onto the lipoyl domains of lipoate-dependent enzymes. Lipoyl-ACP can also act as a substrate although octanoyl-ACP is likely to be the physiological substrate. The chain is Octanoyltransferase from Wolbachia sp. subsp. Brugia malayi (strain TRS).